The sequence spans 255 residues: 5'-nucleotidase SurE (255 aa).

Residues Asp8, Asp9, Ser40, and Asn95 each coordinate a divalent metal cation.

The protein belongs to the SurE nucleotidase family. It depends on a divalent metal cation as a cofactor.

The protein localises to the cytoplasm. It carries out the reaction a ribonucleoside 5'-phosphate + H2O = a ribonucleoside + phosphate. Nucleotidase that shows phosphatase activity on nucleoside 5'-monophosphates. The sequence is that of 5'-nucleotidase SurE from Solidesulfovibrio magneticus (strain ATCC 700980 / DSM 13731 / RS-1) (Desulfovibrio magneticus).